The sequence spans 92 residues: Small ribosomal subunit protein uS19 (92 aa).

It belongs to the universal ribosomal protein uS19 family.

Protein S19 forms a complex with S13 that binds strongly to the 16S ribosomal RNA. The chain is Small ribosomal subunit protein uS19 from Listeria innocua serovar 6a (strain ATCC BAA-680 / CLIP 11262).